The chain runs to 263 residues: Phosphatidylserine decarboxylase proenzyme (263 aa).

Catalysis depends on charge relay system; for autoendoproteolytic cleavage activity residues aspartate 90, histidine 146, and serine 230. Serine 230 functions as the Schiff-base intermediate with substrate; via pyruvic acid; for decarboxylase activity in the catalytic mechanism. Serine 230 carries the pyruvic acid (Ser); by autocatalysis modification.

This sequence belongs to the phosphatidylserine decarboxylase family. PSD-B subfamily. Prokaryotic type I sub-subfamily. As to quaternary structure, heterodimer of a large membrane-associated beta subunit and a small pyruvoyl-containing alpha subunit. Pyruvate serves as cofactor. Is synthesized initially as an inactive proenzyme. Formation of the active enzyme involves a self-maturation process in which the active site pyruvoyl group is generated from an internal serine residue via an autocatalytic post-translational modification. Two non-identical subunits are generated from the proenzyme in this reaction, and the pyruvate is formed at the N-terminus of the alpha chain, which is derived from the carboxyl end of the proenzyme. The autoendoproteolytic cleavage occurs by a canonical serine protease mechanism, in which the side chain hydroxyl group of the serine supplies its oxygen atom to form the C-terminus of the beta chain, while the remainder of the serine residue undergoes an oxidative deamination to produce ammonia and the pyruvoyl prosthetic group on the alpha chain. During this reaction, the Ser that is part of the protease active site of the proenzyme becomes the pyruvoyl prosthetic group, which constitutes an essential element of the active site of the mature decarboxylase.

The protein localises to the cell membrane. The catalysed reaction is a 1,2-diacyl-sn-glycero-3-phospho-L-serine + H(+) = a 1,2-diacyl-sn-glycero-3-phosphoethanolamine + CO2. It functions in the pathway phospholipid metabolism; phosphatidylethanolamine biosynthesis; phosphatidylethanolamine from CDP-diacylglycerol: step 2/2. Catalyzes the formation of phosphatidylethanolamine (PtdEtn) from phosphatidylserine (PtdSer). This Bacillus subtilis (strain 168) protein is Phosphatidylserine decarboxylase proenzyme.